A 193-amino-acid chain; its full sequence is Holliday junction branch migration complex subunit RuvA (193 aa).

The tract at residues Met-1–Leu-64 is domain I. The interval Thr-65 to Leu-139 is domain II. Positions Leu-139–Ala-143 are flexible linker. Residues Ser-144–Val-193 are domain III.

It belongs to the RuvA family. As to quaternary structure, homotetramer. Forms an RuvA(8)-RuvB(12)-Holliday junction (HJ) complex. HJ DNA is sandwiched between 2 RuvA tetramers; dsDNA enters through RuvA and exits via RuvB. An RuvB hexamer assembles on each DNA strand where it exits the tetramer. Each RuvB hexamer is contacted by two RuvA subunits (via domain III) on 2 adjacent RuvB subunits; this complex drives branch migration. In the full resolvosome a probable DNA-RuvA(4)-RuvB(12)-RuvC(2) complex forms which resolves the HJ.

The protein resides in the cytoplasm. Its function is as follows. The RuvA-RuvB-RuvC complex processes Holliday junction (HJ) DNA during genetic recombination and DNA repair, while the RuvA-RuvB complex plays an important role in the rescue of blocked DNA replication forks via replication fork reversal (RFR). RuvA specifically binds to HJ cruciform DNA, conferring on it an open structure. The RuvB hexamer acts as an ATP-dependent pump, pulling dsDNA into and through the RuvAB complex. HJ branch migration allows RuvC to scan DNA until it finds its consensus sequence, where it cleaves and resolves the cruciform DNA. The chain is Holliday junction branch migration complex subunit RuvA from Burkholderia ambifaria (strain MC40-6).